We begin with the raw amino-acid sequence, 234 residues long: RNA-binding protein pno1 (234 aa).

Positions 1-39 are disordered; the sequence is MPTQDSAAKQADDGFQLVQKKSRKRKMTMDMDDADPKAG. The KH domain maps to 158–207; that stretch reads LARCIGRLAGKGGRTKFTIENVTKTRIVLADSKVHILGSYQNIRAARTAL.

This sequence belongs to the PNO1 family.

The protein localises to the nucleus. It localises to the nucleolus. In Ixodes scapularis (Black-legged tick), this protein is RNA-binding protein pno1.